The primary structure comprises 390 residues: ATP phosphoribosyltransferase regulatory subunit (390 aa).

The protein belongs to the class-II aminoacyl-tRNA synthetase family. HisZ subfamily. In terms of assembly, heteromultimer composed of HisG and HisZ subunits.

The protein resides in the cytoplasm. It participates in amino-acid biosynthesis; L-histidine biosynthesis; L-histidine from 5-phospho-alpha-D-ribose 1-diphosphate: step 1/9. Required for the first step of histidine biosynthesis. May allow the feedback regulation of ATP phosphoribosyltransferase activity by histidine. The chain is ATP phosphoribosyltransferase regulatory subunit from Bacillus velezensis (strain DSM 23117 / BGSC 10A6 / LMG 26770 / FZB42) (Bacillus amyloliquefaciens subsp. plantarum).